The chain runs to 220 residues: Putative NAD(P)H nitroreductase (220 aa).

Gly155–Gly160 provides a ligand contact to NAD(+).

The protein belongs to the nitroreductase family. It depends on FMN as a cofactor.

This Haemophilus influenzae (strain ATCC 51907 / DSM 11121 / KW20 / Rd) protein is Putative NAD(P)H nitroreductase.